The following is a 759-amino-acid chain: Arylphorin subunit C223 (759 aa).

The first 15 residues, 1–15 (MKIAIVLLAIVGLAA), serve as a signal peptide directing secretion.

Belongs to the hemocyanin family. As to quaternary structure, heterohexamer. In terms of tissue distribution, fat body.

The protein localises to the secreted. It localises to the extracellular space. In terms of biological role, arylphorin is a larval storage protein (LSP) which may serve as a storage protein used primarily as a source of aromatic amino acids for protein synthesis during metamorphosis. It is a constituent of the sclerotizing system of the cuticle, and serves as a carrier for ecdysteroid hormone. The chain is Arylphorin subunit C223 from Calliphora vicina (Blue blowfly).